A 62-amino-acid chain; its full sequence is Large ribosomal subunit protein uL30 (62 aa).

This sequence belongs to the universal ribosomal protein uL30 family. Part of the 50S ribosomal subunit.

The sequence is that of Large ribosomal subunit protein uL30 from Shewanella frigidimarina (strain NCIMB 400).